The chain runs to 476 residues: Aspartyl/glutamyl-tRNA(Asn/Gln) amidotransferase subunit B (476 aa).

Belongs to the GatB/GatE family. GatB subfamily. As to quaternary structure, heterotrimer of A, B and C subunits.

It catalyses the reaction L-glutamyl-tRNA(Gln) + L-glutamine + ATP + H2O = L-glutaminyl-tRNA(Gln) + L-glutamate + ADP + phosphate + H(+). It carries out the reaction L-aspartyl-tRNA(Asn) + L-glutamine + ATP + H2O = L-asparaginyl-tRNA(Asn) + L-glutamate + ADP + phosphate + 2 H(+). Allows the formation of correctly charged Asn-tRNA(Asn) or Gln-tRNA(Gln) through the transamidation of misacylated Asp-tRNA(Asn) or Glu-tRNA(Gln) in organisms which lack either or both of asparaginyl-tRNA or glutaminyl-tRNA synthetases. The reaction takes place in the presence of glutamine and ATP through an activated phospho-Asp-tRNA(Asn) or phospho-Glu-tRNA(Gln). The chain is Aspartyl/glutamyl-tRNA(Asn/Gln) amidotransferase subunit B from Enterococcus faecalis (strain ATCC 700802 / V583).